The primary structure comprises 843 residues: Complement component C7 (843 aa).

A signal peptide spans 1-22 (MKVISLFILVGFIGEFQSFSSA). Residues 27 to 80 (NCQWDFYAPWSECNGCTKTQTRRRSVAVYGQYGGQPCVGNAFETQSCEPTRGCP) form the TSP type-1 1 domain. 7 disulfide bridges follow: Cys-28–Cys-63, Cys-39–Cys-73, Cys-42–Cys-79, Cys-85–Cys-96, Cys-91–Cys-109, Cys-103–Cys-119, and Cys-128–Cys-165. Trp-36 is a glycosylation site (C-linked (Man) tryptophan). Residues 83-121 (EGCGERFRCFSGQCISKSLVCNGDSDCDEDSADEDRCED) form the LDL-receptor class A domain. A compositionally biased stretch (acidic residues) spans 108 to 120 (DCDEDSADEDRCE). The segment at 108–143 (DCDEDSADEDRCEDSERRPSCDIDKPPPNIELTGNG) is disordered. Basic and acidic residues predominate over residues 121 to 132 (DSERRPSCDIDK). Residues 124–456 (RRPSCDIDKP…EYLDEFDPCH (333 aa)) enclose the MACPF domain. The N-linked (GlcNAc...) asparagine glycan is linked to Asn-202. The disordered stretch occupies residues 219 to 240 (SRKRSFFRSSSSSSRSYTSHTN). Over residues 225–234 (FRSSSSSSRS) the composition is skewed to low complexity. Cystine bridges form between Cys-337-Cys-353, Cys-433-Cys-560, Cys-455-Cys-505, Cys-457-Cys-473, Cys-460-Cys-475, Cys-477-Cys-486, Cys-512-Cys-545, Cys-523-Cys-535, Cys-571-Cys-613, Cys-599-Cys-626, Cys-631-Cys-673, and Cys-659-Cys-688. The region spanning 457-487 (CRPCQNGGLATVEGTHCLCHCKPYTFGAACE) is the EGF-like domain. The TSP type-1 2 domain occupies 500–549 (DGGWSCWSSWSPCVQGKKTRSRECNNPPPSGGGRSCVGETTESTQCEDEE). C-linked (Man) tryptophan; partial glycosylation is found at Trp-503, Trp-506, and Trp-509. Residues 516–538 (KKTRSRECNNPPPSGGGRSCVGE) form a disordered region. 2 CCP regions span residues 545-615 (CEDE…RCGE) and 616-693 (DLRW…QKEN). Sushi domains are found at residues 569-628 (EFCP…HCQK) and 629-690 (IACV…RCVQ). Factor I module (FIM) regions lie at residues 695–770 (LTQA…ASAE) and 771–843 (KACG…AETQ). The O-linked (GalNAc...) threonine glycan is linked to Thr-696. 9 disulfide bridges follow: Cys-702/Cys-713, Cys-715/Cys-750, Cys-721/Cys-743, Cys-728/Cys-763, Cys-773/Cys-782, Cys-776/Cys-789, Cys-791/Cys-825, Cys-797/Cys-818, and Cys-805/Cys-838. A glycan (N-linked (GlcNAc...) (complex) asparagine) is linked at Asn-754.

It belongs to the complement C6/C7/C8/C9 family. Monomer or dimer; as a C5b-7 complex it can also form multimeric rosettes. Component of the membrane attack complex (MAC), composed of complement C5b, C6, C7, C8A, C8B, C8G and multiple copies of the pore-forming subunit C9. Post-translationally, C-, N- and O-glycosylated. O-glycosylated with core 1 or possibly core 8 glycans.

It localises to the secreted. The protein localises to the target cell membrane. Membrane attack complex (MAC) assembly is inhibited by CD59, thereby protecting self-cells from damage during complement activation. MAC assembly is also inhibited by clusterin (CLU) chaperones that inhibit polymerization of C9. Functionally, component of the membrane attack complex (MAC), a multiprotein complex activated by the complement cascade, which inserts into a target cell membrane and forms a pore, leading to target cell membrane rupture and cell lysis. The MAC is initiated by proteolytic cleavage of C5 into complement C5b in response to the classical, alternative, lectin and GZMK complement pathways. The complement pathways consist in a cascade of proteins that leads to phagocytosis and breakdown of pathogens and signaling that strengthens the adaptive immune system. C7 serves as a membrane anchor. During MAC assembly, associates with C5b and C6 to form the C5b-7 complex, a key lipophilic precursor of the MAC complex, which associates with the outer leaflet and reduces the energy for membrane bending. The chain is Complement component C7 from Homo sapiens (Human).